Reading from the N-terminus, the 125-residue chain is Small ribosomal subunit protein bS16 (125 aa).

The disordered stretch occupies residues 87-125 (EGKKKQALARQSASKKAVKEKTEESKGSEVDSETSTSAD). Basic and acidic residues predominate over residues 103-115 (AVKEKTEESKGSE).

It belongs to the bacterial ribosomal protein bS16 family.

In Prochlorococcus marinus (strain MIT 9211), this protein is Small ribosomal subunit protein bS16.